The sequence spans 277 residues: MNSLLFVYGTLRKHEKNHHLLAQSACINEQARTKGSLFAAKEGPTVVFNDEDEGYIYGEVYEADELCIHKLDQFFQGYHKQTVFVETDVGIKIALIYFMNKDGCAGFTKISSGDWKEHQMISKSKNPIYYFAYGSCMDNARFQKAGVDHYFQDPVGRAVLKGYTTRFTLKREDGSRADMLEDGGTTEGVLYRIPYSALSYLYKREGVESLTYRPAFVDVEAGGRHYKDCLTFLVLQKEAEIAPPQHYQIEIERGAELYLSPEFTEKLKRHMNSLPKG.

8 to 11 is a substrate binding site; sequence YGTL. Catalysis depends on glutamate 205, which acts as the Proton acceptor.

It belongs to the gamma-glutamylcyclotransferase family.

Functionally, putative gamma-glutamylcyclotransferase. In Bacillus subtilis (strain 168), this protein is Putative gamma-glutamylcyclotransferase YkqA (ykqA).